We begin with the raw amino-acid sequence, 164 residues long: UPF0114 protein KPN78578_33570 (164 aa).

Transmembrane regions (helical) follow at residues 15–35, 53–73, 109–126, and 136–156; these read LLAPVYFGLSLGLIALTIKFF, MILTLLSLVDMTLVGGLLVMV, VAASIVAISSIHLLRVFM, and LMWYVIIHLTFVLSAFVMGYL.

Belongs to the UPF0114 family.

Its subcellular location is the cell membrane. This Klebsiella pneumoniae subsp. pneumoniae (strain ATCC 700721 / MGH 78578) protein is UPF0114 protein KPN78578_33570.